The primary structure comprises 177 residues: Thymidine kinase (177 aa).

G11 to S18 is an ATP binding site. The active-site Proton acceptor is the E83. F113 contributes to the substrate binding site. 2 residues coordinate Zn(2+): C138 and C141. I157–G161 lines the substrate pocket. The Zn(2+) site is built by C170 and C173.

Belongs to the thymidine kinase family.

The catalysed reaction is thymidine + ATP = dTMP + ADP + H(+). In Sheeppox virus (strain KS-1) (SPPV), this protein is Thymidine kinase (TK).